Here is a 130-residue protein sequence, read N- to C-terminus: Cytochrome b-c1 complex subunit 7 (130 aa).

The protein belongs to the UQCRB/QCR7 family. In terms of assembly, component of the ubiquinol-cytochrome c oxidoreductase (cytochrome b-c1 complex, complex III, CIII), a multisubunit enzyme composed of 3 respiratory subunits cytochrome b, cytochrome c1 and Rieske protein, 2 core protein subunits, and additional low-molecular weight protein subunits. The complex exists as an obligatory dimer and forms supercomplexes (SCs) in the inner mitochondrial membrane with cytochrome c oxidase (complex IV, CIV).

The protein resides in the mitochondrion inner membrane. Component of the ubiquinol-cytochrome c oxidoreductase, a multisubunit transmembrane complex that is part of the mitochondrial electron transport chain which drives oxidative phosphorylation. The respiratory chain contains 3 multisubunit complexes succinate dehydrogenase (complex II, CII), ubiquinol-cytochrome c oxidoreductase (cytochrome b-c1 complex, complex III, CIII) and cytochrome c oxidase (complex IV, CIV), that cooperate to transfer electrons derived from NADH and succinate to molecular oxygen, creating an electrochemical gradient over the inner membrane that drives transmembrane transport and the ATP synthase. The cytochrome b-c1 complex catalyzes electron transfer from ubiquinol to cytochrome c, linking this redox reaction to translocation of protons across the mitochondrial inner membrane, with protons being carried across the membrane as hydrogens on the quinol. In the process called Q cycle, 2 protons are consumed from the matrix, 4 protons are released into the intermembrane space and 2 electrons are passed to cytochrome c. The polypeptide is Cytochrome b-c1 complex subunit 7 (UBCRBP) (Echinococcus multilocularis (Fox tapeworm)).